The following is a 13041-amino-acid chain: Nonribosomal peptide synthetase kk1B (13041 aa).

The adenylation 1 stretch occupies residues 267 to 663; that stretch reads ANRVVDTPQK…GRRDSQIKIR (397 aa). The Carrier 1 domain occupies 788-864; it reads ASLMTEGITL…GLINVMQQSS (77 aa). At serine 825 the chain carries O-(pantetheine 4'-phosphoryl)serine. The condensation 1 stretch occupies residues 882–1313; that stretch reads SFAQGRLWFL…TPIAHLQLTD (432 aa). Positions 1341–1736 are adenylation 2; that stretch reads FQKQVAACPN…GRMDFQIKIR (396 aa). One can recognise a Carrier 2 domain in the interval 1865–1939; the sequence is AARNEIEAVL…NLAATIKRGS (75 aa). At serine 1899 the chain carries O-(pantetheine 4'-phosphoryl)serine. The segment at 1957-2383 is condensation 2; that stretch reads SFAQGRLWFL…DQPQTPLALL (427 aa). An adenylation 3 region spans residues 2418-2812; that stretch reads QVAASPNATA…GRMDQQIKIR (395 aa). Residues 2891–3023 form a methyltransferase (M) domain 1 region; that stretch reads VGNDFMGWTS…EYLSKVLYAL (133 aa). Residues 3353–3427 enclose the Carrier 3 domain; sequence GARNETEAVL…DLAASIRRGS (75 aa). Serine 3387 is modified (O-(pantetheine 4'-phosphoryl)serine). The tract at residues 3445 to 3869 is condensation 3; it reads SFAQGRLWFL…DQPQIPIAVL (425 aa). The segment at 3901-4300 is adenylation 4; sequence FRAQVVACPD…GRMDQQVKIR (400 aa). The Carrier 4 domain occupies 4412–4486; sequence PPRNEIETIL…NLAAAVQRGS (75 aa). Position 4446 is an O-(pantetheine 4'-phosphoryl)serine (serine 4446). The interval 4504–4935 is condensation 4; it reads SFAQGRLWFL…TPIAALSLTD (432 aa). The adenylation 5 stretch occupies residues 4963–5362; the sequence is FREQVATYPD…GRMDRQLKIR (400 aa). Residues 5430-5567 form a methyltransferase (M) domain 2 region; it reads TYAELDTLVK…VAQYFPTPEY (138 aa). In terms of domain architecture, Carrier 5 spans 5897–5971; sequence QPRNEVEAVL…DLAAAIQRGS (75 aa). Serine 5931 is subject to O-(pantetheine 4'-phosphoryl)serine. A condensation 5 region spans residues 5989-6416; the sequence is SYAQGRLWFL…DQPQTPLALL (428 aa). The tract at residues 6451-6845 is adenylation 6; the sequence is QVAASPNATA…GRMDQQIKIR (395 aa). A methyltransferase (M) domain 3 region spans residues 6924–7056; it reads VGNDFMGWTS…EYLSKVLYAL (133 aa). The region spanning 7386 to 7460 is the Carrier 6 domain; it reads GARNEIEAAL…DLAGAVQRGS (75 aa). Residue serine 7420 is modified to O-(pantetheine 4'-phosphoryl)serine. The condensation 6 stretch occupies residues 7478 to 7901; that stretch reads SFAQGRLWFL…GLETPRLPIS (424 aa). An adenylation 7 region spans residues 7934 to 8335; it reads FRTQVAASPD…GRMDRQLKIR (402 aa). The tract at residues 8404–8540 is methyltransferase (M) domain 4; the sequence is YAEIEEIDSS…AQYFPSPEYL (137 aa). Positions 8871-8945 constitute a Carrier 7 domain; the sequence is GPRNEIEALL…DLAASIQRGS (75 aa). Serine 8905 is modified (O-(pantetheine 4'-phosphoryl)serine). The segment at 8963 to 9392 is condensation 7; sequence SFAQGRLWFL…PKTPIAVLPL (430 aa). Residues 9422-9822 are adenylation 8; sequence FRQQVAARPD…SRMDQQVKIR (401 aa). The Carrier 8 domain occupies 9943-10017; it reads PPTNDMERIL…DLASTIKQDS (75 aa). An O-(pantetheine 4'-phosphoryl)serine modification is found at serine 9977. The condensation 8 stretch occupies residues 10035–10462; it reads SFAQGRLWFL…ETPQTPLAVL (428 aa). Residues 10494–10892 form an adenylation 9 region; sequence FRAQVAACPD…GRMDQQIKIR (399 aa). The interval 10959-11105 is methyltransferase (M) domain 5; that stretch reads IYAEIEEIDS…EYLADVVGAL (147 aa). In terms of domain architecture, Carrier 9 spans 11428 to 11502; sequence SARNEVEAVL…DLAASIERNS (75 aa). O-(pantetheine 4'-phosphoryl)serine is present on serine 11462. Positions 11520 to 11945 are condensation 9; it reads SFAQGRLWFL…EQPQTPIAVL (426 aa). Residues 11977 to 12377 form an adenylation 10 region; sequence FRDQVAANPR…GRMDQQIKIR (401 aa). The Carrier 10 domain occupies 12495–12569; that stretch reads VPRNELEASL…DLALKVSSYI (75 aa). Residue serine 12529 is modified to O-(pantetheine 4'-phosphoryl)serine. The tract at residues 12647 to 13032 is condensation 10; that stretch reads FPANADCDKI…RMHEEFCDII (386 aa).

Belongs to the NRP synthetase family.

The protein operates within secondary metabolite biosynthesis. Functionally, nonribosomal peptide synthetase; part of the gene cluster that mediates the biosynthesis of KK-1, a novel cyclic depsipeptide with 10 residues which is a promising active compound with high activity against many plant pathogens, especially Botrytis cinerea. The nonribosomal peptide synthetase (NRPS) kk1B catalyzes the elongation and cyclization of the decapeptide chain composed of 1 D-lactic acid residue (D-Lac), 1 pipecolic acid residue (Pip), 1 aspartic acid residue (Asp), 1 isoleucine residue (Ile), 1 glycine residue (Gly), 1 tyrosine residue (Tyr) and 4 valine residues (Val). The Asp, Ile and 3 Val residues are N-methylated by the 5 methyltransferase domains from the NRPS (found in modules 3, 5, 6, 7 and 9), whereas the Tyr residue is O-methylated by the cluster encoded O-methyltransferase kk1A. Cyclization with the hydroxy group of the D-lactic acid as a nucleophile is presumed to occur in the final module of NRPS, resulting in the formation of the depsipeptide ester bond through macrocyclization by the C-terminal C domain. The thioesterase kk1J is likely to be involved in the corrective mechanism of peptide chain synthesis. The D-lactate dehydrogenase kk1H is involved in the synthesis of D-lactic acid from pyruvic acid, which is recognized by the A domain of the first kk1B module. The pyrroline-5-carboxylate reductase kk1I is involved in the synthesis of the L-pipecolic acid residue of KK-1 from delta-1-pyrroline-5-carboxylate (P5C), a metabolic intermediate of lysine. It is still unclear how kk1C and kk1D are involved in the production of KK-1. This Curvularia clavata protein is Nonribosomal peptide synthetase kk1B.